Here is a 178-residue protein sequence, read N- to C-terminus: Large ribosomal subunit protein uL6 (178 aa).

It belongs to the universal ribosomal protein uL6 family. Part of the 50S ribosomal subunit.

This protein binds to the 23S rRNA, and is important in its secondary structure. It is located near the subunit interface in the base of the L7/L12 stalk, and near the tRNA binding site of the peptidyltransferase center. The chain is Large ribosomal subunit protein uL6 from Corynebacterium aurimucosum (strain ATCC 700975 / DSM 44827 / CIP 107346 / CN-1) (Corynebacterium nigricans).